A 268-amino-acid chain; its full sequence is Undecaprenyl-diphosphatase (268 aa).

7 helical membrane passes run 42 to 62 (VPGK…ICVL), 86 to 106 (AIFV…DFIL), 108 to 128 (VLFT…AIVV), 158 to 178 (IALV…LLVG), 184 to 204 (AAEF…VVSL), 218 to 238 (LIAA…KWLV), and 246 to 266 (FTVF…YFSL).

It belongs to the UppP family.

It localises to the cell inner membrane. It catalyses the reaction di-trans,octa-cis-undecaprenyl diphosphate + H2O = di-trans,octa-cis-undecaprenyl phosphate + phosphate + H(+). Its function is as follows. Catalyzes the dephosphorylation of undecaprenyl diphosphate (UPP). Confers resistance to bacitracin. The sequence is that of Undecaprenyl-diphosphatase from Parvibaculum lavamentivorans (strain DS-1 / DSM 13023 / NCIMB 13966).